Here is a 160-residue protein sequence, read N- to C-terminus: Large ribosomal subunit protein uL15 (160 aa).

Residues 1-11 (MKLNELRDNHG) show a composition bias toward basic and acidic residues. The segment at 1 to 39 (MKLNELRDNHGARPKSKRLGRGIGSGKGKTSGKGVKGQK) is disordered. Residues 21-35 (RGIGSGKGKTSGKGV) are compositionally biased toward gly residues.

It belongs to the universal ribosomal protein uL15 family. In terms of assembly, part of the 50S ribosomal subunit.

Its function is as follows. Binds to the 23S rRNA. This Granulibacter bethesdensis (strain ATCC BAA-1260 / CGDNIH1) protein is Large ribosomal subunit protein uL15.